The chain runs to 78 residues: Acyl carrier protein (78 aa).

Residues 2-77 form the Carrier domain; the sequence is SDIASRVKAI…QAISYIEEAK (76 aa). O-(pantetheine 4'-phosphoryl)serine is present on serine 37.

Belongs to the acyl carrier protein (ACP) family. In terms of processing, 4'-phosphopantetheine is transferred from CoA to a specific serine of apo-ACP by AcpS. This modification is essential for activity because fatty acids are bound in thioester linkage to the sulfhydryl of the prosthetic group.

It localises to the cytoplasm. It participates in lipid metabolism; fatty acid biosynthesis. Its function is as follows. Carrier of the growing fatty acid chain in fatty acid biosynthesis. The protein is Acyl carrier protein of Flavobacterium johnsoniae (strain ATCC 17061 / DSM 2064 / JCM 8514 / BCRC 14874 / CCUG 350202 / NBRC 14942 / NCIMB 11054 / UW101) (Cytophaga johnsonae).